The chain runs to 317 residues: Melanocyte-stimulating hormone receptor (317 aa).

Topologically, residues 1 to 37 are extracellular; the sequence is MPVQGSQRRLLGSLNSTPTATPHLGLAANQTGARCLE. Asn29 is a glycosylation site (N-linked (GlcNAc...) asparagine). Residues 38-63 form a helical membrane-spanning segment; that stretch reads VSIPDGLFLSLGLVSLVENVLVVTAI. Residues 64-72 lie on the Cytoplasmic side of the membrane; sequence AKNRNLHSP. A helical transmembrane segment spans residues 73 to 93; it reads MYCFICCLALSDLLVSGSNML. Over 94-118 the chain is Extracellular; sequence ETAVILLLEAGALAARAAVVQQLDN. Residues 119–140 form a helical membrane-spanning segment; that stretch reads VIDVITCSSMLSSLCFLGAIAV. Over 141–163 the chain is Cytoplasmic; that stretch reads DRYISIFYALRYHSIVTLPRARR. A helical transmembrane segment spans residues 164-183; that stretch reads AVAAIWVASVLFSMLFIAYY. The Extracellular portion of the chain corresponds to 184 to 191; it reads DHAAVLLC. A helical transmembrane segment spans residues 192-211; that stretch reads LVVFFLAMLVLMAVLYVHML. Residues 212 to 240 lie on the Cytoplasmic side of the membrane; sequence ARACQHAQGIARLHKRQRPAHQSFGLKGA. The chain crosses the membrane as a helical span at residues 241 to 266; that stretch reads ATLTILLGIFFLCWGPFFLHLTLIVL. Topologically, residues 267–279 are extracellular; it reads CPQHPTCSCIFKN. The helical transmembrane segment at 280–300 threads the bilayer; it reads FNLFLTLIICNAIIDPLIYAF. Over 301 to 317 the chain is Cytoplasmic; that stretch reads RSQELRRTLKEVLLCSW. Cys315 is lipidated: S-palmitoyl cysteine.

The protein belongs to the G-protein coupled receptor 1 family. In terms of assembly, interacts with MGRN1, but does not undergo MGRN1-mediated ubiquitination; this interaction competes with GNAS-binding and thus inhibits agonist-induced cAMP production. Interacts with OPN3; the interaction results in a decrease in MC1R-mediated cAMP signaling and ultimately a decrease in melanin production in melanocytes.

Its subcellular location is the cell membrane. Functionally, receptor for MSH (alpha, beta and gamma) and ACTH. The activity of this receptor is mediated by G proteins which activate adenylate cyclase. Mediates melanogenesis, the production of eumelanin (black/brown) and phaeomelanin (red/yellow), via regulation of cAMP signaling in melanocytes. This is Melanocyte-stimulating hormone receptor (MC1R) from Erythrocebus patas (Red guenon).